The primary structure comprises 1174 residues: Carboxylic acid reductase (1174 aa).

AMP contacts are provided by residues H297, S392, 413–414 (EG), T418, D491, 503–506 (YLDR), K512, and K612. In terms of domain architecture, Carrier spans 651-726 (APVLVTVCRA…ALADYVEAAR (76 aa)). Position 685 is an O-(pantetheine 4'-phosphoryl)serine (S685). Residues 787–791 (TGFLG), R814, R824, 854–855 (DK), 880–882 (PAA), 919–920 (TS), Y956, and K960 each bind NADP(+).

The protein belongs to the ATP-dependent AMP-binding enzyme family. Carboxylic acid reductase subfamily. Pantetheine 4'-phosphate serves as cofactor.

It catalyses the reaction a carboxylate + ATP + NADPH + H(+) = an aldehyde + AMP + diphosphate + NADP(+). Its function is as follows. Catalyzes the ATP- and NADPH-dependent reduction of carboxylic acids to the corresponding aldehydes. Catalyzes the reduction of a wide range of aliphatic fatty acids (C6-C18) into their corresponding aldehydes. Can also reduce benzoate to benzaldehyde. Has a preference for NADPH over NADH as the electron donor. The chain is Carboxylic acid reductase from Mycobacterium marinum (strain ATCC BAA-535 / M).